The chain runs to 1026 residues: Beta-galactosidase (1026 aa).

2 residues coordinate substrate: N104 and D203. D203 lines the Na(+) pocket. E418, H420, and E463 together coordinate Mg(2+). Residues E463 and 539 to 542 contribute to the substrate site; that span reads EYAH. E463 (proton donor) is an active-site residue. E539 acts as the Nucleophile in catalysis. N599 provides a ligand contact to Mg(2+). 2 residues coordinate Na(+): F603 and N606. Positions 606 and 1002 each coordinate substrate.

It belongs to the glycosyl hydrolase 2 family. As to quaternary structure, homotetramer. Mg(2+) serves as cofactor. Na(+) is required as a cofactor.

The enzyme catalyses Hydrolysis of terminal non-reducing beta-D-galactose residues in beta-D-galactosides.. In Erwinia tasmaniensis (strain DSM 17950 / CFBP 7177 / CIP 109463 / NCPPB 4357 / Et1/99), this protein is Beta-galactosidase.